The following is a 255-amino-acid chain: Enolase-phosphatase E1 (255 aa).

Residues D22 and E24 each coordinate Mg(2+). Substrate-binding positions include 136–137 (SS) and K173. D199 lines the Mg(2+) pocket.

It belongs to the HAD-like hydrolase superfamily. MasA/MtnC family. In terms of assembly, monomer. Requires Mg(2+) as cofactor.

It is found in the cytoplasm. The protein resides in the nucleus. It catalyses the reaction 5-methylsulfanyl-2,3-dioxopentyl phosphate + H2O = 1,2-dihydroxy-5-(methylsulfanyl)pent-1-en-3-one + phosphate. The protein operates within amino-acid biosynthesis; L-methionine biosynthesis via salvage pathway; L-methionine from S-methyl-5-thio-alpha-D-ribose 1-phosphate: step 3/6. It participates in amino-acid biosynthesis; L-methionine biosynthesis via salvage pathway; L-methionine from S-methyl-5-thio-alpha-D-ribose 1-phosphate: step 4/6. Its function is as follows. Bifunctional enzyme that catalyzes the enolization of 2,3-diketo-5-methylthiopentyl-1-phosphate (DK-MTP-1-P) into the intermediate 2-hydroxy-3-keto-5-methylthiopentenyl-1-phosphate (HK-MTPenyl-1-P), which is then dephosphorylated to form the acireductone 1,2-dihydroxy-3-keto-5-methylthiopentene (DHK-MTPene). The polypeptide is Enolase-phosphatase E1 (Verticillium alfalfae (strain VaMs.102 / ATCC MYA-4576 / FGSC 10136) (Verticillium wilt of alfalfa)).